A 148-amino-acid chain; its full sequence is Holo-[acyl-carrier-protein] synthase (148 aa).

Mg(2+)-binding residues include D8 and E57.

This sequence belongs to the P-Pant transferase superfamily. AcpS family. It depends on Mg(2+) as a cofactor.

The protein localises to the cytoplasm. It carries out the reaction apo-[ACP] + CoA = holo-[ACP] + adenosine 3',5'-bisphosphate + H(+). Transfers the 4'-phosphopantetheine moiety from coenzyme A to a Ser of acyl-carrier-protein. This is Holo-[acyl-carrier-protein] synthase from Ruegeria pomeroyi (strain ATCC 700808 / DSM 15171 / DSS-3) (Silicibacter pomeroyi).